A 794-amino-acid polypeptide reads, in one-letter code: ATP-dependent RNA helicase SUPV3L1, mitochondrial (794 aa).

The transit peptide at 1 to 30 (MRRCAWPLLRLSSRVGLALRHGGAVRLRQA) directs the protein to the mitochondrion. One can recognise a Helicase ATP-binding domain in the interval 182-322 (EARAIQRKII…AIDLVTELMY (141 aa)). ATP is bound at residue 195–202 (GPTNSGKT). The Helicase C-terminal domain occupies 341–506 (VLDYALESLD…GLHPTPEQIE (166 aa)). Disordered stretches follow at residues 678-741 (EVMS…HGRG) and 764-794 (EWQD…KKKK). The span at 689–704 (TKRDARTVSDHRDAKS) shows a compositional bias: basic and acidic residues.

This sequence belongs to the helicase family. Mg(2+) is required as a cofactor. It depends on Mn(2+) as a cofactor.

It localises to the nucleus. The protein localises to the mitochondrion matrix. It is found in the mitochondrion nucleoid. It catalyses the reaction ATP + H2O = ADP + phosphate + H(+). Its function is as follows. Major helicase player in mitochondrial RNA metabolism. Component of the mitochondrial degradosome (mtEXO) complex, that degrades 3' overhang double-stranded RNA with a 3'-to-5' directionality in an ATP-dependent manner. ATPase and ATP-dependent multisubstrate helicase, able to unwind double-stranded (ds) DNA and RNA, and RNA/DNA heteroduplexes in the 5'-to-3' direction. Plays a role in the RNA surveillance system in mitochondria; regulates the stability of mature mRNAs, the removal of aberrantly formed mRNAs and the rapid degradation of non coding processing intermediates. Also implicated in recombination and chromatin maintenance pathways. May protect cells from apoptosis. Associates with mitochondrial DNA. The protein is ATP-dependent RNA helicase SUPV3L1, mitochondrial (SUPV3L1) of Gallus gallus (Chicken).